A 360-amino-acid polypeptide reads, in one-letter code: Protein pelota homolog (360 aa).

Belongs to the eukaryotic release factor 1 family. Pelota subfamily. Monomer. A divalent metal cation serves as cofactor.

Its subcellular location is the cytoplasm. May function in recognizing stalled ribosomes, interact with stem-loop structures in stalled mRNA molecules, and effect endonucleolytic cleavage of the mRNA. May play a role in the release non-functional ribosomes and degradation of damaged mRNAs. Has endoribonuclease activity. The polypeptide is Protein pelota homolog (Hyperthermus butylicus (strain DSM 5456 / JCM 9403 / PLM1-5)).